The following is a 228-amino-acid chain: 2-C-methyl-D-erythritol 4-phosphate cytidylyltransferase (228 aa).

The protein belongs to the IspD/TarI cytidylyltransferase family. IspD subfamily.

It catalyses the reaction 2-C-methyl-D-erythritol 4-phosphate + CTP + H(+) = 4-CDP-2-C-methyl-D-erythritol + diphosphate. It functions in the pathway isoprenoid biosynthesis; isopentenyl diphosphate biosynthesis via DXP pathway; isopentenyl diphosphate from 1-deoxy-D-xylulose 5-phosphate: step 2/6. In terms of biological role, catalyzes the formation of 4-diphosphocytidyl-2-C-methyl-D-erythritol from CTP and 2-C-methyl-D-erythritol 4-phosphate (MEP). The protein is 2-C-methyl-D-erythritol 4-phosphate cytidylyltransferase of Crocosphaera subtropica (strain ATCC 51142 / BH68) (Cyanothece sp. (strain ATCC 51142)).